A 423-amino-acid chain; its full sequence is CinA-like protein (423 aa).

The protein belongs to the CinA family.

This Prochlorococcus marinus (strain SARG / CCMP1375 / SS120) protein is CinA-like protein.